Reading from the N-terminus, the 457-residue chain is Putative purine-cytosine permease YxlA (457 aa).

12 helical membrane-spanning segments follow: residues 24–44, 50–70, 90–110, 127–147, 164–184, 192–212, 228–248, 264–284, 316–336, 341–361, 392–412, and 420–440; these read FPVWFGANMHITTLVTGTIPV, LFWSVAAIICGTLIGAIFMAS, FGVIGAILPLFLVMFIYLGFF, IPGSWSIIGLSAVCFLLTIFG, AVFFAATILIFQLPIPAGSWI, IFLVAVSAVATWQLAYAPYVA, FWYSYAGTSVSSIWMMLLGAL, IVQLFGPFSFIMLIIVLFGQM, IIMILGVTLVGTVLSLLGQSN, FLNFIFFISYFLIPWTAINLV, IAFVLSILLEIPFINTSFYIG, and GGDIAWIIGLAVPSVLYYVLM.

Belongs to the purine-cytosine permease (2.A.39) family.

It localises to the cell membrane. In Bacillus subtilis (strain 168), this protein is Putative purine-cytosine permease YxlA (yxlA).